The chain runs to 337 residues: tRNA N6-adenosine threonylcarbamoyltransferase (337 aa).

His111 and His115 together coordinate Fe cation. Residues Leu134 to Gly138, Asp167, Gly180, and Asn272 each bind substrate. Asp300 serves as a coordination point for Fe cation.

It belongs to the KAE1 / TsaD family. Fe(2+) serves as cofactor.

The protein localises to the cytoplasm. The enzyme catalyses L-threonylcarbamoyladenylate + adenosine(37) in tRNA = N(6)-L-threonylcarbamoyladenosine(37) in tRNA + AMP + H(+). In terms of biological role, required for the formation of a threonylcarbamoyl group on adenosine at position 37 (t(6)A37) in tRNAs that read codons beginning with adenine. Is involved in the transfer of the threonylcarbamoyl moiety of threonylcarbamoyl-AMP (TC-AMP) to the N6 group of A37, together with TsaE and TsaB. TsaD likely plays a direct catalytic role in this reaction. In Enterobacter sp. (strain 638), this protein is tRNA N6-adenosine threonylcarbamoyltransferase.